A 294-amino-acid polypeptide reads, in one-letter code: Nucleotide-binding protein Daud_0300 (294 aa).

ATP is bound at residue 11-18; that stretch reads GLSGAGKT. 62-65 lines the GTP pocket; sequence DIRG.

Belongs to the RapZ-like family.

Its function is as follows. Displays ATPase and GTPase activities. The protein is Nucleotide-binding protein Daud_0300 of Desulforudis audaxviator (strain MP104C).